Here is a 334-residue protein sequence, read N- to C-terminus: uncharacterized protein (334 aa).

2 consecutive transmembrane segments (helical) span residues 19–39 (AFLR…SFGI) and 55–75 (LIVL…AALF). The segment at 308–334 (KPESKSSSQKSVETEIEKEVKDKLAKN) is disordered. Basic and acidic residues predominate over residues 319 to 334 (VETEIEKEVKDKLAKN).

The protein localises to the cell membrane. This is an uncharacterized protein from Mycoplasma genitalium (strain ATCC 33530 / DSM 19775 / NCTC 10195 / G37) (Mycoplasmoides genitalium).